A 72-amino-acid chain; its full sequence is Translation initiation factor IF-1 (72 aa).

The region spanning 1 to 72 (MAKDDVIEID…DKGRITYRYK (72 aa)) is the S1-like domain.

Belongs to the IF-1 family. In terms of assembly, component of the 30S ribosomal translation pre-initiation complex which assembles on the 30S ribosome in the order IF-2 and IF-3, IF-1 and N-formylmethionyl-tRNA(fMet); mRNA recruitment can occur at any time during PIC assembly.

It localises to the cytoplasm. Its function is as follows. One of the essential components for the initiation of protein synthesis. Stabilizes the binding of IF-2 and IF-3 on the 30S subunit to which N-formylmethionyl-tRNA(fMet) subsequently binds. Helps modulate mRNA selection, yielding the 30S pre-initiation complex (PIC). Upon addition of the 50S ribosomal subunit IF-1, IF-2 and IF-3 are released leaving the mature 70S translation initiation complex. This chain is Translation initiation factor IF-1, found in Campylobacter curvus (strain 525.92).